The following is a 92-amino-acid chain: UPF0223 protein SMU_1141c (92 aa).

Belongs to the UPF0223 family.

This chain is UPF0223 protein SMU_1141c, found in Streptococcus mutans serotype c (strain ATCC 700610 / UA159).